We begin with the raw amino-acid sequence, 145 residues long: 3-dehydroquinate dehydratase (145 aa).

Residue Tyr22 is the Proton acceptor of the active site. Substrate-binding residues include Asn71, His77, and Asp84. His97 serves as the catalytic Proton donor. Substrate contacts are provided by residues 98–99 (IS) and Arg108.

It belongs to the type-II 3-dehydroquinase family. Homododecamer.

It carries out the reaction 3-dehydroquinate = 3-dehydroshikimate + H2O. It participates in metabolic intermediate biosynthesis; chorismate biosynthesis; chorismate from D-erythrose 4-phosphate and phosphoenolpyruvate: step 3/7. Its function is as follows. Catalyzes a trans-dehydration via an enolate intermediate. The polypeptide is 3-dehydroquinate dehydratase (Exiguobacterium sp. (strain ATCC BAA-1283 / AT1b)).